The following is a 296-amino-acid chain: Dof zinc finger protein DOF3.7 (296 aa).

Positions 41-69 (NTRPNATASNGGSGGNTNNTATMETRKAR) are disordered. A compositionally biased stretch (low complexity) spans 45 to 62 (NATASNGGSGGNTNNTAT). The Dof-type zinc finger occupies 74–128 (VNCPRCNSTNTKFCYYNNYSLTQPRYFCKGCRRYWTEGGSLRNVPVGGSSRKNKR). Cysteine 76, cysteine 79, cysteine 101, and cysteine 104 together coordinate Zn(2+). The segment at 115–146 (RNVPVGGSSRKNKRSSTPLASPSNPKLPDLNP) is disordered. Polar residues predominate over residues 129-138 (SSTPLASPSN).

As to expression, expressed in the phloem of the mother plant, including in roots, stem, leaves and flowers, but not present in the seed and embryo. In maturing siliques, found all through the funiculus connecting the placenta to the ovule, but not in the ovule.

It localises to the nucleus. Its function is as follows. Transcription factor specifically involved in the maternal control of seed germination. Regulates transcription by binding to a 5'-AA[AG]G-3' consensus core sequence. May ensure the inactivity of a component that would be activated to trigger germination as a consequence of red light perception. The protein is Dof zinc finger protein DOF3.7 (DOF3.7) of Arabidopsis thaliana (Mouse-ear cress).